A 195-amino-acid polypeptide reads, in one-letter code: Imidazoleglycerol-phosphate dehydratase (195 aa).

Belongs to the imidazoleglycerol-phosphate dehydratase family.

The protein resides in the cytoplasm. The enzyme catalyses D-erythro-1-(imidazol-4-yl)glycerol 3-phosphate = 3-(imidazol-4-yl)-2-oxopropyl phosphate + H2O. Its pathway is amino-acid biosynthesis; L-histidine biosynthesis; L-histidine from 5-phospho-alpha-D-ribose 1-diphosphate: step 6/9. The polypeptide is Imidazoleglycerol-phosphate dehydratase (Geobacillus kaustophilus (strain HTA426)).